We begin with the raw amino-acid sequence, 418 residues long: STE20-related kinase adapter protein beta (418 aa).

The 312-residue stretch at 58 to 369 (YELQVEIGRG…ASSLLSHVFF (312 aa)) folds into the Protein kinase domain. Residues 64 to 72 (IGRGFDNLT) and K89 each bind ATP.

It belongs to the protein kinase superfamily. STE Ser/Thr protein kinase family. STE20 subfamily. In terms of assembly, component of a trimeric complex composed of STK11/LKB1, STRAD (STRADA or STRADB) and CAB39/MO25 (CAB39/MO25alpha or CAB39L/MO25beta): the complex tethers STK11/LKB1 in the cytoplasm and stimulates its catalytic activity. Interacts with BIRC4/XIAP. These two proteins are likely to coexist in a complex with TAK1, TRAF6, TAB1 and TAB2. Highly expressed in heart, skeletal muscle, testis, liver and colon.

The protein localises to the nucleus. Its subcellular location is the cytoplasm. Pseudokinase which, in complex with CAB39/MO25 (CAB39/MO25alpha or CAB39L/MO25beta), binds to and activates STK11/LKB1. Adopts a closed conformation typical of active protein kinases and binds STK11/LKB1 as a pseudosubstrate, promoting conformational change of STK11/LKB1 in an active conformation. The chain is STE20-related kinase adapter protein beta (STRADB) from Homo sapiens (Human).